Here is a 401-residue protein sequence, read N- to C-terminus: Tryptophan synthase beta chain (401 aa).

The residue at position 88 (K88) is an N6-(pyridoxal phosphate)lysine.

The protein belongs to the TrpB family. As to quaternary structure, tetramer of two alpha and two beta chains. Pyridoxal 5'-phosphate serves as cofactor.

It catalyses the reaction (1S,2R)-1-C-(indol-3-yl)glycerol 3-phosphate + L-serine = D-glyceraldehyde 3-phosphate + L-tryptophan + H2O. The protein operates within amino-acid biosynthesis; L-tryptophan biosynthesis; L-tryptophan from chorismate: step 5/5. Its function is as follows. The beta subunit is responsible for the synthesis of L-tryptophan from indole and L-serine. In Shewanella denitrificans (strain OS217 / ATCC BAA-1090 / DSM 15013), this protein is Tryptophan synthase beta chain.